Consider the following 303-residue polypeptide: Growth/differentiation factor 15 (303 aa).

Residues Met-1–Ser-30 form the signal peptide. A propeptide spanning residues Trp-31–Arg-188 is cleaved from the precursor. Asn-71 carries N-linked (GlcNAc...) asparagine glycosylation. Disulfide bonds link Cys-198–Cys-205, Cys-206–Cys-269, Cys-235–Cys-300, and Cys-239–Cys-302.

It belongs to the TGF-beta family. In terms of assembly, homodimer; disulfide-linked. Interacts with GFRAL and RET; ligand of GFRAL, which mediates GDF15 internalization and cellular signaling through interaction with RET via the formation of a 2:2:2 ternary complex composed of GDF15, GFRAL and RET. In terms of tissue distribution, detected in plasma (at protein level). Highly expressed in liver. Expressed in the distal small intestine, colon and kidney. Expressed in skeletal muscle in response to mitochondrial stress. Expressed by cardiomyocytes, expression is highly increased in heart diseases. Also detected in subcutaneous fat.

It localises to the secreted. Functionally, hormone produced in response to various stresses to confer information about those stresses to the brain, and trigger an aversive response, characterized by nausea and/or loss of appetite. The aversive response is both required to reduce continuing exposure to those stresses at the time of exposure and to promote avoidance behavior in the future. Acts by binding to its receptor, GFRAL, activating GFRAL-expressing neurons localized in the area postrema and nucleus tractus solitarius of the brainstem. It then triggers the activation of neurons localized within the parabrachial nucleus and central amygdala, which constitutes part of the 'emergency circuit' that shapes responses to stressful conditions. The GDF15-GFRAL signal induces expression of genes involved in metabolism, such as lipid metabolism in adipose tissues. Required for avoidance behavior in response to food allergens: induced downstream of mast cell activation to promote aversion and minimize harmful effects of exposure to noxious substances. In addition to suppress appetite, also promotes weight loss by enhancing energy expenditure in muscle: acts by increasing calcium futile cycling in muscle. Contributes to the effect of metformin, an anti-diabetic drug, on appetite reduction and weight loss: produced in the kidney in response to metformin treatment, thereby activating the GDF15-GFRAL response, leading to reduced appetite and weight. Produced in response to anticancer drugs, such as camptothecin or cisplatin, promoting nausea and contributing to malnutrition. Overproduced in many cancers, promoting anorexia in cancer (cachexia). Responsible for the risk of nausea during pregnancy: high levels of GDF15 during pregnancy, mostly originating from embryos, are associated with increased nausea. Maternal sensitivity to nausea is probably determined by pre-pregnancy exposure to GDF15, females with naturally high level of GDF15 being less susceptible to nausea than female mice with low levels of GDF15 before pregnancy. Promotes metabolic adaptation in response to systemic inflammation caused by bacterial and viral infections in order to promote tissue tolerance and prevent tissue damage. Required for tissue tolerance in response to myocardial infarction by acting as an inhibitor of leukocyte integring activation, thereby protecting against cardiac rupture. Inhibits growth hormone signaling on hepatocytes. The polypeptide is Growth/differentiation factor 15 (Mus musculus (Mouse)).